We begin with the raw amino-acid sequence, 373 residues long: Transaldolase (373 aa).

K143 serves as the catalytic Schiff-base intermediate with substrate.

Belongs to the transaldolase family. Type 2 subfamily.

The protein localises to the cytoplasm. The catalysed reaction is D-sedoheptulose 7-phosphate + D-glyceraldehyde 3-phosphate = D-erythrose 4-phosphate + beta-D-fructose 6-phosphate. It participates in carbohydrate degradation; pentose phosphate pathway; D-glyceraldehyde 3-phosphate and beta-D-fructose 6-phosphate from D-ribose 5-phosphate and D-xylulose 5-phosphate (non-oxidative stage): step 2/3. Transaldolase is important for the balance of metabolites in the pentose-phosphate pathway. This is Transaldolase from Mycobacterium marinum (strain ATCC BAA-535 / M).